A 97-amino-acid chain; its full sequence is uncharacterized protein (97 aa).

This is an uncharacterized protein from Escherichia coli (strain K12).